Consider the following 173-residue polypeptide: Shikimate kinase 2 (173 aa).

12–17 (GCGKTT) is an ATP binding site. Mg(2+) contacts are provided by Thr-16 and Asp-32. Substrate contacts are provided by Asp-34, Arg-58, and Gly-79. The tract at residues 112-126 (EENPQDNQRPTLTGR) is LID domain. Position 120 (Arg-120) interacts with ATP. Residue Arg-139 participates in substrate binding. Position 155 (Gln-155) interacts with ATP.

The protein belongs to the shikimate kinase family. AroL subfamily. In terms of assembly, monomer. Requires Mg(2+) as cofactor.

Its subcellular location is the cytoplasm. It carries out the reaction shikimate + ATP = 3-phosphoshikimate + ADP + H(+). It participates in metabolic intermediate biosynthesis; chorismate biosynthesis; chorismate from D-erythrose 4-phosphate and phosphoenolpyruvate: step 5/7. Catalyzes the specific phosphorylation of the 3-hydroxyl group of shikimic acid using ATP as a cosubstrate. In Pectobacterium atrosepticum (strain SCRI 1043 / ATCC BAA-672) (Erwinia carotovora subsp. atroseptica), this protein is Shikimate kinase 2.